Reading from the N-terminus, the 431-residue chain is Na(+)-translocating NADH-quinone reductase subunit F (431 aa).

The helical transmembrane segment at 9 to 29 (FICIASLIFCAIGVILAGVIL) threads the bilayer. Residues 39–133 (HPCKLKINDN…DMSLEIEERY (95 aa)) enclose the 2Fe-2S ferredoxin-type domain. Positions 76, 82, 85, and 117 each coordinate [2Fe-2S] cluster. Residues 136–286 (ASSWEGTVIS…SGPYGESFMK (151 aa)) enclose the FAD-binding FR-type domain. The segment at 289–413 (DRPLIFLIGG…PLHNSSILKL (125 aa)) is catalytic.

The protein belongs to the NqrF family. As to quaternary structure, composed of six subunits; NqrA, NqrB, NqrC, NqrD, NqrE and NqrF. [2Fe-2S] cluster is required as a cofactor. FAD serves as cofactor.

It is found in the cell inner membrane. The enzyme catalyses a ubiquinone + n Na(+)(in) + NADH + H(+) = a ubiquinol + n Na(+)(out) + NAD(+). NQR complex catalyzes the reduction of ubiquinone-1 to ubiquinol by two successive reactions, coupled with the transport of Na(+) ions from the cytoplasm to the periplasm. The first step is catalyzed by NqrF, which accepts electrons from NADH and reduces ubiquinone-1 to ubisemiquinone by a one-electron transfer pathway. This chain is Na(+)-translocating NADH-quinone reductase subunit F, found in Chlamydia pneumoniae (Chlamydophila pneumoniae).